The primary structure comprises 757 residues: Catalase-peroxidase (757 aa).

The tryptophyl-tyrosyl-methioninium (Trp-Tyr) (with M-274) cross-link spans 101-248 (WHSAGTYRIG…LAAVQMGLIY (148 aa)). The active-site Proton acceptor is the His102. The disordered stretch occupies residues 213–232 (VHHPDEHRGAKEKASKNSDS). Positions 248 to 274 (YVNPEGPDGCPDPLASARDIRETFARM) form a cross-link, tryptophyl-tyrosyl-methioninium (Tyr-Met) (with W-101). His289 provides a ligand contact to heme b.

It belongs to the peroxidase family. Peroxidase/catalase subfamily. In terms of assembly, homodimer or homotetramer. Heme b is required as a cofactor. Post-translationally, formation of the three residue Trp-Tyr-Met cross-link is important for the catalase, but not the peroxidase activity of the enzyme.

The enzyme catalyses H2O2 + AH2 = A + 2 H2O. It carries out the reaction 2 H2O2 = O2 + 2 H2O. Its function is as follows. Bifunctional enzyme with both catalase and broad-spectrum peroxidase activity. This is Catalase-peroxidase from Xylella fastidiosa (strain M23).